The primary structure comprises 126 residues: Large ribosomal subunit protein bL20c (126 aa).

It belongs to the bacterial ribosomal protein bL20 family.

The protein resides in the plastid. The protein localises to the chloroplast. Its function is as follows. Binds directly to 23S ribosomal RNA and is necessary for the in vitro assembly process of the 50S ribosomal subunit. It is not involved in the protein synthesizing functions of that subunit. The chain is Large ribosomal subunit protein bL20c from Pelargonium hortorum (Common geranium).